The following is a 308-amino-acid chain: Methionyl-tRNA formyltransferase (308 aa).

110–113 (SLLP) contributes to the (6S)-5,6,7,8-tetrahydrofolate binding site.

Belongs to the Fmt family.

The catalysed reaction is L-methionyl-tRNA(fMet) + (6R)-10-formyltetrahydrofolate = N-formyl-L-methionyl-tRNA(fMet) + (6S)-5,6,7,8-tetrahydrofolate + H(+). In terms of biological role, attaches a formyl group to the free amino group of methionyl-tRNA(fMet). The formyl group appears to play a dual role in the initiator identity of N-formylmethionyl-tRNA by promoting its recognition by IF2 and preventing the misappropriation of this tRNA by the elongation apparatus. The polypeptide is Methionyl-tRNA formyltransferase (Neisseria meningitidis serogroup B (strain ATCC BAA-335 / MC58)).